The following is a 178-amino-acid chain: 3-hydroxyacyl-[acyl-carrier-protein] dehydratase FabZ (178 aa).

Residue histidine 54 is part of the active site.

It belongs to the thioester dehydratase family. FabZ subfamily.

It localises to the cytoplasm. It carries out the reaction a (3R)-hydroxyacyl-[ACP] = a (2E)-enoyl-[ACP] + H2O. In terms of biological role, involved in unsaturated fatty acids biosynthesis. Catalyzes the dehydration of short chain beta-hydroxyacyl-ACPs and long chain saturated and unsaturated beta-hydroxyacyl-ACPs. This chain is 3-hydroxyacyl-[acyl-carrier-protein] dehydratase FabZ, found in Yersinia enterocolitica.